The sequence spans 498 residues: Galactose-1-phosphate uridylyltransferase (498 aa).

It belongs to the galactose-1-phosphate uridylyltransferase type 2 family.

It is found in the cytoplasm. The enzyme catalyses alpha-D-galactose 1-phosphate + UDP-alpha-D-glucose = alpha-D-glucose 1-phosphate + UDP-alpha-D-galactose. Its pathway is carbohydrate metabolism; galactose metabolism. This is Galactose-1-phosphate uridylyltransferase from Clostridium perfringens (strain 13 / Type A).